We begin with the raw amino-acid sequence, 309 residues long: Transaldolase (309 aa).

The active-site Schiff-base intermediate with substrate is Lys125.

It belongs to the transaldolase family. Type 1 subfamily. In terms of assembly, homodimer.

The protein localises to the cytoplasm. It catalyses the reaction D-sedoheptulose 7-phosphate + D-glyceraldehyde 3-phosphate = D-erythrose 4-phosphate + beta-D-fructose 6-phosphate. Its pathway is carbohydrate degradation; pentose phosphate pathway; D-glyceraldehyde 3-phosphate and beta-D-fructose 6-phosphate from D-ribose 5-phosphate and D-xylulose 5-phosphate (non-oxidative stage): step 2/3. Functionally, transaldolase is important for the balance of metabolites in the pentose-phosphate pathway. This is Transaldolase from Pseudomonas syringae pv. tomato (strain ATCC BAA-871 / DC3000).